Consider the following 308-residue polypeptide: D-alanine--D-alanine ligase (308 aa).

The 201-residue stretch at 102-302 (KHVAKAAGIP…FGEFLRWMVE (201 aa)) folds into the ATP-grasp domain. Residue 128–183 (PMKPPYVVKPVREGSSFGVVIVKEDQSHPPQVITSSEWRYGDRVMVERYIAGREFT) coordinates ATP. Mg(2+) is bound by residues D252, E269, and N271.

Belongs to the D-alanine--D-alanine ligase family. Mg(2+) is required as a cofactor. The cofactor is Mn(2+).

Its subcellular location is the cytoplasm. The catalysed reaction is 2 D-alanine + ATP = D-alanyl-D-alanine + ADP + phosphate + H(+). It participates in cell wall biogenesis; peptidoglycan biosynthesis. In terms of biological role, cell wall formation. The sequence is that of D-alanine--D-alanine ligase from Rhizobium meliloti (strain 1021) (Ensifer meliloti).